The sequence spans 286 residues: MYLQDVIMKLNDFWASKGCLLEQPYDMEVGAGTFHPATFFGSLRKGPWKVAYVQPSRRPTDGRYGENPNRLQRYFQYQVIIKPSPENSQELYLESLEYLGINLKEHDIRFVEDNWESPTLGAWGVGWEVWLDGMEITQFTYFQQIGGISLKDIPLEITYGLERIAMYLQGVDNVYEVQWNENVKYGDVFLENEREFSVFNFEEANVGLLFRHFDEYEKEFYRLVEKNLYLPAYDYILKCSHTFNLLDARGAISVSQRQTYVKRIQAMARKVARVFLEVQANENSPA.

Belongs to the class-II aminoacyl-tRNA synthetase family. Tetramer of two alpha and two beta subunits.

The protein resides in the cytoplasm. The enzyme catalyses tRNA(Gly) + glycine + ATP = glycyl-tRNA(Gly) + AMP + diphosphate. This Thermotoga sp. (strain RQ2) protein is Glycine--tRNA ligase alpha subunit.